The chain runs to 764 residues: 5-methyltetrahydropteroyltriglutamate--homocysteine methyltransferase (764 aa).

5-methyltetrahydropteroyltri-L-glutamate contacts are provided by residues 16–19 and K121; that span reads RELK. L-homocysteine contacts are provided by residues 440 to 442 and E493; that span reads IGS. L-methionine-binding positions include 440–442 and E493; that span reads IGS. 5-methyltetrahydropteroyltri-L-glutamate is bound by residues 524–525 and W570; that span reads RC. D608 contributes to the L-homocysteine binding site. D608 contributes to the L-methionine binding site. Position 614 (E614) interacts with 5-methyltetrahydropteroyltri-L-glutamate. Residues H650, C652, and E674 each contribute to the Zn(2+) site. H703 acts as the Proton donor in catalysis. C735 is a Zn(2+) binding site.

Belongs to the vitamin-B12 independent methionine synthase family. It depends on Zn(2+) as a cofactor.

The enzyme catalyses 5-methyltetrahydropteroyltri-L-glutamate + L-homocysteine = tetrahydropteroyltri-L-glutamate + L-methionine. It participates in amino-acid biosynthesis; L-methionine biosynthesis via de novo pathway; L-methionine from L-homocysteine (MetE route): step 1/1. Its function is as follows. Catalyzes the transfer of a methyl group from 5-methyltetrahydrofolate to homocysteine resulting in methionine formation. In Burkholderia ambifaria (strain ATCC BAA-244 / DSM 16087 / CCUG 44356 / LMG 19182 / AMMD) (Burkholderia cepacia (strain AMMD)), this protein is 5-methyltetrahydropteroyltriglutamate--homocysteine methyltransferase.